The sequence spans 1854 residues: Dystrophin, isoform D (1854 aa).

8 disordered regions span residues 1-65 (MTTT…PIYA), 84-161 (GSTT…YEMP), 240-352 (QSPT…MSPA), 516-548 (LKPT…PTPS), 595-650 (TPGG…TSES), 716-740 (VMSK…PSTA), 783-830 (LKLQ…STTP), and 1012-1036 (VSDT…EQSR). Composition is skewed to low complexity over residues 11-37 (QRQQ…QQHQ) and 84-96 (GSTT…LQSS). Positions 143–157 (GLSSAQPATSASSGN) are enriched in polar residues. Residues 276–296 (QQQQQQQQAGINGQINGNGNQ) are compositionally biased toward low complexity. Composition is skewed to polar residues over residues 331–345 (TLSR…SSAD) and 518–536 (PTST…SNTA). Residues 595–606 (TPGGGVVGGQAA) are compositionally biased toward gly residues. Positions 716–727 (VMSKSNSSLGSV) are enriched in polar residues. Low complexity-rich tracts occupy residues 728–740 (TTPS…PSTA) and 783–814 (LKLQ…QQIQ). The segment covering 815–830 (NGFASDDNSSSCSTTP) has biased composition (polar residues). 2 Spectrin repeats span residues 936 to 1069 (EHWN…RLDE) and 1072 to 1176 (TKMR…VLCQ). Residues 1179–1209 (AQQTHENGDDGRTTSNSGTIGPLPNLGQSVK) are disordered. Positions 1206–1239 (QSVKPPWERATTAANVPYYIDHERETTHWDHPEM) constitute a WW domain. The segment at 1464–1520 (KHQAKCNICKEYPIVGFRYRCLKCFNFDMCQKCFFFGRNAKNHKLTHPMHEYCTTTT) adopts a ZZ-type zinc-finger fold. Positions 1469, 1472, 1484, 1487, 1493, 1496, 1506, and 1510 each coordinate Zn(2+). The residue at position 1564 (serine 1564) is a Phosphoserine. Disordered regions lie at residues 1673-1701 (EQSG…GEQG) and 1744-1854 (DEPN…ELQK). 2 stretches are compositionally biased toward polar residues: residues 1682-1694 (NGMQ…MTGL) and 1765-1796 (ALNS…QQNG). Acidic residues predominate over residues 1815 to 1826 (QELESINDDLED). The segment covering 1827–1845 (SSSSNTTNTTTTTTTTATT) has biased composition (low complexity).

In terms of assembly, component of the dystrophin associated protein complex (DAPC). Interacts with Dg, via the Dg WW domain binding sites. During embryogenesis and in third instar larvae, expression is seen in pericardial cells of the dorsal vessel and in the ventral nerve cord. Expression is absent from both the embryonic and larval musculature.

Its subcellular location is the cell membrane. The protein resides in the sarcolemma. The protein localises to the cytoplasm. It is found in the cytoskeleton. Its function is as follows. Required for the maintenance of appropriate synaptic retrograde communication and the stabilization of muscle cell architecture or physiology. May play a role in anchoring the cytoskeleton to the plasma membrane. This Drosophila melanogaster (Fruit fly) protein is Dystrophin, isoform D (Dys).